The primary structure comprises 118 residues: Small ribosomal subunit protein uS13 (118 aa).

The disordered stretch occupies residues 94 to 118; that stretch reads GLPVRGQRTKTNARTRKGPRKPIKK.

It belongs to the universal ribosomal protein uS13 family. In terms of assembly, part of the 30S ribosomal subunit. Forms a loose heterodimer with protein S19. Forms two bridges to the 50S subunit in the 70S ribosome.

Located at the top of the head of the 30S subunit, it contacts several helices of the 16S rRNA. In the 70S ribosome it contacts the 23S rRNA (bridge B1a) and protein L5 of the 50S subunit (bridge B1b), connecting the 2 subunits; these bridges are implicated in subunit movement. Contacts the tRNAs in the A and P-sites. The polypeptide is Small ribosomal subunit protein uS13 (Klebsiella pneumoniae (strain 342)).